The primary structure comprises 402 residues: Multidrug resistance protein MdtH (402 aa).

11 helical membrane-spanning segments follow: residues 13 to 33 (YFLL…FPLI), 34 to 54 (SIRF…ALGL), 99 to 116 (PWLL…GTLF), 139 to 159 (LLMM…SWLL), 165 to 185 (LVCA…AWLL), 214 to 234 (VLTL…LPIM), 243 to 263 (AAVK…LYPI), 277 to 297 (LMAG…VSSV), 300 to 320 (LFVL…ARET), 340 to 360 (LGLA…FDSG), and 368 to 388 (LPWV…WWQF).

Belongs to the major facilitator superfamily. DHA1 family. MdtH (TC 2.A.1.2.21) subfamily.

Its subcellular location is the cell inner membrane. The polypeptide is Multidrug resistance protein MdtH (Enterobacter sp. (strain 638)).